The sequence spans 373 residues: Mitochondrial nicotinamide adenine dinucleotide transporter 1 (373 aa).

The Mitochondrial matrix portion of the chain corresponds to 1-80; that stretch reads MTQTDNPVPN…WVPLSSTQIT (80 aa). 3 Solcar repeats span residues 75–166, 174–263, and 276–364; these read SSTQ…SKKF, FDFV…LKVR, and INLQ…FRNR. Residues 81 to 101 traverse the membrane as a helical segment; the sequence is ALSGAFAGFLSGVAVCPLDVA. Over 102–141 the chain is Mitochondrial intermembrane; it reads KTRLQAQGLQTRFENPYYRGIMGTLSTIVRDEGPRGLYKG. A helical transmembrane segment spans residues 142-162; it reads LVPIVLGYFPTWMIYFSVYEF. At 163 to 176 the chain is on the mitochondrial matrix side; the sequence is SKKFFHGIFPQFDF. The helical transmembrane segment at 177 to 199 threads the bilayer; the sequence is VAQSCAAITAGAASTTLTNPIWV. Over 200–235 the chain is Mitochondrial intermembrane; it reads VKTRLMLQSNLGEHPTHYKGTFDAFRKLFYQEGFKA. A helical transmembrane segment spans residues 236–256; that stretch reads LYAGLVPSLLGLFHVAIHFPI. The Mitochondrial matrix segment spans residues 257-280; sequence YEDLKVRFHCYSRENNTNSINLQR. The helical transmembrane segment at 281–297 threads the bilayer; it reads LIMASSVSKMIASAVTY. The Mitochondrial intermembrane segment spans residues 298-335; that stretch reads PHEILRTRMQLKSDIPDSIQRRLFPLIKATYAQEGLKG. A helical membrane pass occupies residues 336–358; sequence FYSGFTTNLVRTIPASAITLVSF. The Mitochondrial matrix segment spans residues 359-373; the sequence is EYFRNRLENISTMVI.

This sequence belongs to the mitochondrial carrier (TC 2.A.29) family.

The protein resides in the mitochondrion inner membrane. The catalysed reaction is dAMP(in) + NAD(+)(out) = dAMP(out) + NAD(+)(in). It carries out the reaction dGMP(in) + NAD(+)(out) = dGMP(out) + NAD(+)(in). It catalyses the reaction GMP(in) + NAD(+)(out) = GMP(out) + NAD(+)(in). The enzyme catalyses AMP(in) + NAD(+)(out) = AMP(out) + NAD(+)(in). The catalysed reaction is deamido-NAD(+)(in) + NAD(+)(out) = deamido-NAD(+)(out) + NAD(+)(in). Its function is as follows. Mitochondrial inner membrane carrier protein that mediates the import of NAD(+) into mitochondria. Can transport NAD(+) by unidirectional transport or by exchange with intramitochondrially generated dAMP and dGMP. Also able to transport NAD(+) by exchange with AMP, GMP or deamido-NAD (+) in vitro. The sequence is that of Mitochondrial nicotinamide adenine dinucleotide transporter 1 (YIA6) from Saccharomyces cerevisiae (strain ATCC 204508 / S288c) (Baker's yeast).